Here is a 231-residue protein sequence, read N- to C-terminus: 7-cyano-7-deazaguanine synthase (231 aa).

8–18 provides a ligand contact to ATP; sequence FSGGQDSTTCL. Positions 188, 197, 200, and 203 each coordinate Zn(2+).

It belongs to the QueC family. Requires Zn(2+) as cofactor.

The enzyme catalyses 7-carboxy-7-deazaguanine + NH4(+) + ATP = 7-cyano-7-deazaguanine + ADP + phosphate + H2O + H(+). Its pathway is purine metabolism; 7-cyano-7-deazaguanine biosynthesis. Its function is as follows. Catalyzes the ATP-dependent conversion of 7-carboxy-7-deazaguanine (CDG) to 7-cyano-7-deazaguanine (preQ(0)). This Escherichia coli (strain SE11) protein is 7-cyano-7-deazaguanine synthase.